The primary structure comprises 138 residues: Cysteine desulfuration protein SufE (138 aa).

Catalysis depends on Cys51, which acts as the Cysteine persulfide intermediate.

Belongs to the SufE family. Homodimer. Interacts with SufS.

It is found in the cytoplasm. It participates in cofactor biosynthesis; iron-sulfur cluster biosynthesis. Participates in cysteine desulfuration mediated by SufS. Cysteine desulfuration mobilizes sulfur from L-cysteine to yield L-alanine and constitutes an essential step in sulfur metabolism for biosynthesis of a variety of sulfur-containing biomolecules. Functions as a sulfur acceptor for SufS, by mediating the direct transfer of the sulfur atom from the S-sulfanylcysteine of SufS, an intermediate product of cysteine desulfuration process. The chain is Cysteine desulfuration protein SufE from Citrobacter koseri (strain ATCC BAA-895 / CDC 4225-83 / SGSC4696).